The sequence spans 2183 residues: MALLSRTAAEEVIASFTSEEQSRISTQAVLALTNVEKDKHDLFNYALPELAKMRLFNSGIYLSPHSYRPHSHPVCKTLENNILFNILPSYLDNSFYLVSIKKNKVDFLKRRHPDLQMVETINRYISSIDKTRYGGFFHVSPSKISAKFKCDRRTGFEDDASLIDLIPGCMEGARKRFFFHDELHYWTKEALITFLDHVKPEVMLASIVFPPEILAGAKESLNPWCYTFRIVGKDLVFFPDGEQSEAYIQPVAGSYLLRTGKITTPSGDIFQLDLLKSSFSHHLISITKGEAIGQKMRFFNGFEAVAMKGLNPLRRKVESCLPISKNTILKIYRYLRTLKKPDLQSAMAKLSQVCKDPNGYEIKFFEEFSKLCLKCDTLNTNMIPDMKRIVQGFFLKLFPNPISRNFKVVQQLHLDNFIETLEEFNFSINTESLSLNWKDDLEFVNLTFGDTDFNVEDSFAEAWGTKKDVVNITTVHHSPYLVSKFESYDHQFHSILSVKSISALTRIAKIVLSLYDPCVVEAFSESRVTNLAVNVIIAANLRACFAVTDLWRIFEGILLKECKRAQGKMRKRFHFELGIRWFLFVDVSNQWFLPPCRDGLIARSVSFDQFIKGCQRDNSLHNGRMSLRQVLKGPKLQALFDVSELSIIHNVEMENAPEAGSTLDAGIKPTSSPLEVVPIENARCNLAPCKCDLNCFIQPADVNSLHGNLVFLDFIGGSKGRGASFYSRDLKGYSYTGFSHVSRGWPAFLDKFLSDNKIPLNFYNQCLVQEYSTGHGLSMHKDDESIYDINHQVLTVNYSGDAIFCIECLGSGFEIPLSGPQMLLMPFGFQKEHRHGIKSPSKGRISLTFRLTKEGDSQVPIQEVVTICDHGDSDDRAALKALERRSHQSGGRPAVELEGHEREKVNSDSSDSAPVQEFLIQIDSSLLEYALKSLSGLSKNVVNCDMCLCNSPWLKNEELRFSEALRDLAFAQGLIQLIDFLCLKVLRCAEVNRIISELPTHVFPLRGTMHIVDLDDESIRGDVKEGSFSGFRRWKVMSCSTDLIMLAFLKPKMTLGGELRSHEDECELSDLTEKLHGCSVILSRKFEPDLFHSFDVEADGNCFWHSVGPLIGVDGEYLKRILHDQAKKDGVKCPRLSKQLEGNTWAEREAVAYFCSHYGIRLNVLYTREECTWIFKPHEVLKAATLICQDNHFKPCMPVNGCVIRAISSALNRREVDVLAVLGKPAHEDLFEEVAEGRGFSIFDLTRLFEIFSICGSVDTGGELIMVNENGRIPAEFSLEKEHLAHIPTLSRRKFSPIVSDLNRVSNSAMRFLAINGAEVDYRPSIDRASTLLDSFEIGATGVLCQGIKEAQKDLASKLIPELVHERKLIMILGTFGCGKSSLFKKFIEKSPGKAITFVSPRRSLAESINHDLGLARVGGKKTGKSKDLKNVRVKTFELFILHLDSIKEGHTVVIDEIQLFPPGYIDLIILGLKPNVNIIIAGDPCQSDYDCSSDRHIFAGSESDIMRILSGRSYKFNILSQRFRNPVFYGRLPCNLNKTRLTLDEEEYTLWDSIQEFSMMGRKDCPVVLVSSFEEKKIVAAHLGLKMKCITYGESTGLNFQKGAILVTYESALTSDRRWWTALSRFSHDIHFINGMGVTWDNAITHFVGKPLHKFFTKRACNDDIIDLLPGRPELIEGFQSQVGADEGVREAKLVGDPWLKTKIFLGQNPDFEIEIADEVEAAEDWFKTHIPIMSLEAVRAQWVHKLISREDREFRIGDITTEQFTDDHSKNRGQELTNAAERYEAIYPRHKGTDTATFLMAVKKRLSFSSPAAEHAKLRRAKPFGKFLLDTFLKRVPLNSSHDEKMMQEAVHAFEEKKLSKSMATIENHSGRSCEDWPVDKALIFMKSQLCTKFDNRFRSAKAGQTLACFQHSVLCRFAPYMRYIESKVTEVLPKNLYIHSGKNIDDLAAWVTTSKFNGVCTESDYEAFDASQDHFILAFELEVMKFLGLPSDLIADYTFIKTHLGSKLGSFAIMRFTGEASTFLFNTMANMLFTFLRYDLNGREAICFAGDDMCANSRLKVTNRFSNFLDKIKLKAKVQFTATPTFCGWGLCEHGVFKKPDLVLERLQIARETRNLENCIDNYAIEVSCAYKMGENLNLYLTPQEVDAHYNCVRFIVQHNHLLKSNIRDLFKGESLPASS.

Residues 63–256 (SPHSYRPHSH…YIQPVAGSYL (194 aa)) enclose the Alphavirus-like MT domain. In terms of domain architecture, Fe2OG dioxygenase spans 762 to 853 (FYNQCLVQEY…RISLTFRLTK (92 aa)). Fe cation-binding residues include His780, Asp782, and His835. Residue Arg844 participates in 2-oxoglutarate binding. The tract at residues 883 to 910 (ERRSHQSGGRPAVELEGHEREKVNSDSS) is disordered. The span at 895 to 906 (VELEGHEREKVN) shows a compositional bias: basic and acidic residues. In terms of domain architecture, OTU spans 1091–1199 (FHSFDVEADG…DNHFKPCMPV (109 aa)). Residues 1198–1288 (PVNGCVIRAI…LEKEHLAHIP (91 aa)) form the Peptidase C23 domain. Residues Cys1202 and His1283 contribute to the active site. Positions 1349-1520 (KEAQKDLASK…SGRSYKFNIL (172 aa)) constitute a (+)RNA virus helicase ATP-binding domain. Position 1374-1381 (1374-1381 (GTFGCGKS)) interacts with ATP. Residues 1521-1667 (SQRFRNPVFY…TKRACNDDII (147 aa)) enclose the (+)RNA virus helicase C-terminal domain. A RdRp catalytic domain is found at 1961–2068 (GVCTESDYEA…NSRLKVTNRF (108 aa)).

This sequence belongs to the potexviruses/carlaviruses RNA replication protein family. Fe(2+) is required as a cofactor. Post-translationally, specific enzymatic cleavages by the viral protease yield mature proteins.

It catalyses the reaction ATP + H2O = ADP + phosphate + H(+). It carries out the reaction RNA(n) + a ribonucleoside 5'-triphosphate = RNA(n+1) + diphosphate. Its function is as follows. RNA-directed RNA polymerase involved in viral RNA replication. Functionally, protease: Thiol protease that cleaves the polyprotein. The protein is RNA replication polyprotein of Apple stem pitting virus (isolate PA66) (ASPV).